Reading from the N-terminus, the 208-residue chain is Ribosomal RNA large subunit methyltransferase E (208 aa).

The S-adenosyl-L-methionine site is built by Gly63, Trp65, Asp83, Asp99, and Asp124. The Proton acceptor role is filled by Lys164.

It belongs to the class I-like SAM-binding methyltransferase superfamily. RNA methyltransferase RlmE family.

The protein localises to the cytoplasm. The catalysed reaction is uridine(2552) in 23S rRNA + S-adenosyl-L-methionine = 2'-O-methyluridine(2552) in 23S rRNA + S-adenosyl-L-homocysteine + H(+). Its function is as follows. Specifically methylates the uridine in position 2552 of 23S rRNA at the 2'-O position of the ribose in the fully assembled 50S ribosomal subunit. The protein is Ribosomal RNA large subunit methyltransferase E of Salmonella arizonae (strain ATCC BAA-731 / CDC346-86 / RSK2980).